The following is a 264-amino-acid chain: Thymidylate synthase (264 aa).

DUMP is bound at residue arginine 21. Residue histidine 51 coordinates (6R)-5,10-methylene-5,6,7,8-tetrahydrofolate. Arginine 126–arginine 127 provides a ligand contact to dUMP. The active-site Nucleophile is the cysteine 146. DUMP is bound by residues arginine 166 to aspartate 169, asparagine 177, and histidine 207 to tyrosine 209. Aspartate 169 lines the (6R)-5,10-methylene-5,6,7,8-tetrahydrofolate pocket. A (6R)-5,10-methylene-5,6,7,8-tetrahydrofolate-binding site is contributed by alanine 263.

Belongs to the thymidylate synthase family. Bacterial-type ThyA subfamily. As to quaternary structure, homodimer.

It is found in the cytoplasm. It catalyses the reaction dUMP + (6R)-5,10-methylene-5,6,7,8-tetrahydrofolate = 7,8-dihydrofolate + dTMP. It participates in pyrimidine metabolism; dTTP biosynthesis. In terms of biological role, catalyzes the reductive methylation of 2'-deoxyuridine-5'-monophosphate (dUMP) to 2'-deoxythymidine-5'-monophosphate (dTMP) while utilizing 5,10-methylenetetrahydrofolate (mTHF) as the methyl donor and reductant in the reaction, yielding dihydrofolate (DHF) as a by-product. This enzymatic reaction provides an intracellular de novo source of dTMP, an essential precursor for DNA biosynthesis. The polypeptide is Thymidylate synthase (Pectobacterium atrosepticum (strain SCRI 1043 / ATCC BAA-672) (Erwinia carotovora subsp. atroseptica)).